Reading from the N-terminus, the 353-residue chain is Holliday junction branch migration complex subunit RuvB (353 aa).

Residues 1–183 (MNEPRIVAPQ…FGATYRLDFY (183 aa)) are large ATPase domain (RuvB-L). ATP-binding positions include L22, R23, G64, K67, T68, T69, 130-132 (EDF), R173, Y183, and R220. T68 contributes to the Mg(2+) binding site. Residues 184-254 (DTAALRAIVE…LARLALDQLA (71 aa)) form a small ATPAse domain (RuvB-S) region. The tract at residues 257–353 (ELGLDEVDRL…HAASERSSDA (97 aa)) is head domain (RuvB-H). DNA is bound by residues R312 and R317.

This sequence belongs to the RuvB family. Homohexamer. Forms an RuvA(8)-RuvB(12)-Holliday junction (HJ) complex. HJ DNA is sandwiched between 2 RuvA tetramers; dsDNA enters through RuvA and exits via RuvB. An RuvB hexamer assembles on each DNA strand where it exits the tetramer. Each RuvB hexamer is contacted by two RuvA subunits (via domain III) on 2 adjacent RuvB subunits; this complex drives branch migration. In the full resolvosome a probable DNA-RuvA(4)-RuvB(12)-RuvC(2) complex forms which resolves the HJ.

Its subcellular location is the cytoplasm. The enzyme catalyses ATP + H2O = ADP + phosphate + H(+). Functionally, the RuvA-RuvB-RuvC complex processes Holliday junction (HJ) DNA during genetic recombination and DNA repair, while the RuvA-RuvB complex plays an important role in the rescue of blocked DNA replication forks via replication fork reversal (RFR). RuvA specifically binds to HJ cruciform DNA, conferring on it an open structure. The RuvB hexamer acts as an ATP-dependent pump, pulling dsDNA into and through the RuvAB complex. RuvB forms 2 homohexamers on either side of HJ DNA bound by 1 or 2 RuvA tetramers; 4 subunits per hexamer contact DNA at a time. Coordinated motions by a converter formed by DNA-disengaged RuvB subunits stimulates ATP hydrolysis and nucleotide exchange. Immobilization of the converter enables RuvB to convert the ATP-contained energy into a lever motion, pulling 2 nucleotides of DNA out of the RuvA tetramer per ATP hydrolyzed, thus driving DNA branch migration. The RuvB motors rotate together with the DNA substrate, which together with the progressing nucleotide cycle form the mechanistic basis for DNA recombination by continuous HJ branch migration. Branch migration allows RuvC to scan DNA until it finds its consensus sequence, where it cleaves and resolves cruciform DNA. This Thermomicrobium roseum (strain ATCC 27502 / DSM 5159 / P-2) protein is Holliday junction branch migration complex subunit RuvB.